Consider the following 271-residue polypeptide: Shikimate dehydrogenase (NADP(+)) (271 aa).

Residues 14 to 16 (SQS) and T61 contribute to the shikimate site. Catalysis depends on K65, which acts as the Proton acceptor. Shikimate-binding residues include N86 and D101. Residues 125–129 (GAGGA), 148–153 (NRTHAR), and M212 contribute to the NADP(+) site. Residue Y214 coordinates shikimate. G236 serves as a coordination point for NADP(+).

This sequence belongs to the shikimate dehydrogenase family. As to quaternary structure, homodimer.

It carries out the reaction shikimate + NADP(+) = 3-dehydroshikimate + NADPH + H(+). The protein operates within metabolic intermediate biosynthesis; chorismate biosynthesis; chorismate from D-erythrose 4-phosphate and phosphoenolpyruvate: step 4/7. Involved in the biosynthesis of the chorismate, which leads to the biosynthesis of aromatic amino acids. Catalyzes the reversible NADPH linked reduction of 3-dehydroshikimate (DHSA) to yield shikimate (SA). This is Shikimate dehydrogenase (NADP(+)) from Edwardsiella ictaluri (strain 93-146).